The primary structure comprises 103 residues: Large ribosomal subunit protein bL21 (103 aa).

This sequence belongs to the bacterial ribosomal protein bL21 family. As to quaternary structure, part of the 50S ribosomal subunit. Contacts protein L20.

Functionally, this protein binds to 23S rRNA in the presence of protein L20. This is Large ribosomal subunit protein bL21 from Kocuria rhizophila (strain ATCC 9341 / DSM 348 / NBRC 103217 / DC2201).